Consider the following 403-residue polypeptide: Lipid droplet-regulating VLDL assembly factor AUP1 (403 aa).

Over 1–21 (MEQPSVESLLELRRFPRKQLS) the chain is Cytoplasmic. An intramembrane segment occupies 22–42 (LILLLLYSPLGLCLFLIRLFI). Over 43 to 399 (GAHVFLVSCV…GSVGREEEEK (357 aa)) the chain is Cytoplasmic. The region spanning 286-328 (TQMQMAQHVKEVLPQVPLSAIHRDLGHTGCIDTTITNFLEGRV) is the CUE domain.

This sequence belongs to the AUP1 family.

The protein resides in the endoplasmic reticulum membrane. Its subcellular location is the lipid droplet. Functionally, plays a role in the translocation of terminally misfolded proteins from the endoplasmic reticulum lumen to the cytoplasm and their degradation by the proteasome. Plays a role in lipid droplet formation. Induces lipid droplet clustering. The chain is Lipid droplet-regulating VLDL assembly factor AUP1 from Xenopus tropicalis (Western clawed frog).